A 500-amino-acid polypeptide reads, in one-letter code: Coiled-coil domain-containing protein 125 (500 aa).

Residues 1–105 (MSKVPRSSSE…TDSNSELSDE (105 aa)) are disordered. The segment covering 10–23 (EAEDIWETEDDMTE) has biased composition (acidic residues). Over residues 92 to 101 (RLSSTDSNSE) the composition is skewed to polar residues. 2 coiled-coil regions span residues 101–237 (ELSD…LEAL) and 286–314 (STRK…TADA). S492 is modified (phosphoserine).

In terms of tissue distribution, expressed in many tissues, with highest levels in spleen, thymus and bone marrow.

Its subcellular location is the cytoplasm. In terms of biological role, may be involved in the regulation of cell migration. The sequence is that of Coiled-coil domain-containing protein 125 (Ccdc125) from Mus musculus (Mouse).